Here is a 615-residue protein sequence, read N- to C-terminus: Aldehyde oxidase GLOX1 (615 aa).

Positions methionine 1–alanine 25 are cleaved as a signal peptide. The N-linked (GlcNAc...) asparagine glycan is linked to asparagine 35. Positions proline 70 to glycine 89 are disordered. The segment covering lysine 72–glycine 82 has biased composition (basic residues). 2 N-linked (GlcNAc...) asparagine glycosylation sites follow: asparagine 187 and asparagine 297.

It is found in the secreted. The catalysed reaction is an aldehyde + O2 + H2O = a carboxylate + H2O2 + H(+). Catalyzes the oxidation of aldehydes to the corresponding carboxylate by coupling the reaction to the reduction of dioxygen to hydrogen peroxide. Substrates include glyoxal and other aldehydes. May be regulated by the transcription factor MYB80 during anther development and play a role in tapetum and pollen development. This Arabidopsis thaliana (Mouse-ear cress) protein is Aldehyde oxidase GLOX1.